Consider the following 129-residue polypeptide: Small ribosomal subunit protein uS11c (129 aa).

It belongs to the universal ribosomal protein uS11 family. In terms of assembly, part of the 30S ribosomal subunit.

The protein resides in the plastid. The protein localises to the chloroplast. The polypeptide is Small ribosomal subunit protein uS11c (Pleurastrum terricola (Filamentous green alga)).